Reading from the N-terminus, the 188-residue chain is Large ribosomal subunit protein bL9 (188 aa).

The span at 149 to 170 (RSEEEAERQARGEEIGVEKEEP) shows a compositional bias: basic and acidic residues. The tract at residues 149–188 (RSEEEAERQARGEEIGVEKEEPSGFVEEALEETVEAPAEA) is disordered.

Belongs to the bacterial ribosomal protein bL9 family.

Its function is as follows. Binds to the 23S rRNA. The sequence is that of Large ribosomal subunit protein bL9 from Gluconacetobacter diazotrophicus (strain ATCC 49037 / DSM 5601 / CCUG 37298 / CIP 103539 / LMG 7603 / PAl5).